Consider the following 436-residue polypeptide: 3-ketoacyl-CoA thiolase (436 aa).

The Acyl-thioester intermediate role is filled by Cys99. Residues His392 and Cys422 each act as proton acceptor in the active site.

It belongs to the thiolase-like superfamily. Thiolase family. As to quaternary structure, heterotetramer of two alpha chains (FadJ) and two beta chains (FadI).

Its subcellular location is the cytoplasm. It carries out the reaction an acyl-CoA + acetyl-CoA = a 3-oxoacyl-CoA + CoA. Its pathway is lipid metabolism; fatty acid beta-oxidation. Catalyzes the final step of fatty acid oxidation in which acetyl-CoA is released and the CoA ester of a fatty acid two carbons shorter is formed. The protein is 3-ketoacyl-CoA thiolase of Photorhabdus laumondii subsp. laumondii (strain DSM 15139 / CIP 105565 / TT01) (Photorhabdus luminescens subsp. laumondii).